The primary structure comprises 324 residues: tRNA N6-adenosine threonylcarbamoyltransferase (324 aa).

Residues H107, H111, and Y127 each coordinate Fe cation. Residues 127–131 (YVSGG), D159, G172, E176, and N257 each bind substrate. Residue D285 coordinates Fe cation.

It belongs to the KAE1 / TsaD family. As to quaternary structure, monomer. Component of the KEOPS complex that consists of Kae1, Bud32, Cgi121 and Pcc1; the whole complex dimerizes. Fe(2+) serves as cofactor.

It is found in the cytoplasm. It carries out the reaction L-threonylcarbamoyladenylate + adenosine(37) in tRNA = N(6)-L-threonylcarbamoyladenosine(37) in tRNA + AMP + H(+). In terms of biological role, required for the formation of a threonylcarbamoyl group on adenosine at position 37 (t(6)A37) in tRNAs that read codons beginning with adenine. Is a component of the KEOPS complex that is probably involved in the transfer of the threonylcarbamoyl moiety of threonylcarbamoyl-AMP (TC-AMP) to the N6 group of A37. Kae1 likely plays a direct catalytic role in this reaction, but requires other protein(s) of the complex to fulfill this activity. In Pyrococcus furiosus (strain ATCC 43587 / DSM 3638 / JCM 8422 / Vc1), this protein is tRNA N6-adenosine threonylcarbamoyltransferase.